We begin with the raw amino-acid sequence, 75 residues long: DNA-directed RNA polymerase subunit omega (75 aa).

The protein belongs to the RNA polymerase subunit omega family. In terms of assembly, in cyanobacteria the RNAP catalytic core is composed of 2 alpha, 1 beta, 1 beta', 1 gamma and 1 omega subunit. When a sigma factor is associated with the core the holoenzyme is formed, which can initiate transcription.

The catalysed reaction is RNA(n) + a ribonucleoside 5'-triphosphate = RNA(n+1) + diphosphate. In terms of biological role, promotes RNA polymerase assembly. Latches the N- and C-terminal regions of the beta' subunit thereby facilitating its interaction with the beta and alpha subunits. The protein is DNA-directed RNA polymerase subunit omega of Prochlorococcus marinus (strain MIT 9211).